We begin with the raw amino-acid sequence, 71 residues long: Small ribosomal subunit protein bS21 (71 aa).

The protein belongs to the bacterial ribosomal protein bS21 family.

This Dichelobacter nodosus (strain VCS1703A) protein is Small ribosomal subunit protein bS21.